The following is a 557-amino-acid chain: Putative inactive polypeptide N-acetylgalactosaminyltransferase 11 (557 aa).

Over 1–4 (MKSL) the chain is Cytoplasmic. Residues 5–27 (LFGTPCSCAIFILVYCIITLFIW) traverse the membrane as a helical; Signal-anchor for type II membrane protein segment. At 28–557 (FLYTDNLSNA…MRDICLSVNH (530 aa)) the chain is on the lumenal side. Asn-33 and Asn-103 each carry an N-linked (GlcNAc...) asparagine glycan. 5 disulfides stabilise this stretch: Cys-99-Cys-325, Cys-316-Cys-397, Cys-437-Cys-450, Cys-472-Cys-486, and Cys-511-Cys-526. Residues 109–215 (TVTVSIVIAI…RGWLPPLLEP (107 aa)) form a catalytic subdomain A region. Asn-220 is a glycosylation site (N-linked (GlcNAc...) asparagine). The tract at residues 271–333 (PYPSSQLEGR…PCSRVGIIYK (63 aa)) is catalytic subdomain B. Asn-379 carries N-linked (GlcNAc...) asparagine glycosylation. The 102-residue stretch at 456–557 (EDWTLTSRCQ…MRDICLSVNH (102 aa)) folds into the Ricin B-type lectin domain.

Belongs to the glycosyltransferase 2 family. GalNAc-T subfamily.

It localises to the golgi apparatus membrane. In terms of biological role, probable inactive glycosyltransferase. In Drosophila melanogaster (Fruit fly), this protein is Putative inactive polypeptide N-acetylgalactosaminyltransferase 11.